A 490-amino-acid chain; its full sequence is MKHLLLLRLVLPKPNYILRRSFLFHSGKTTPSPLDPYDTLQRRVARSGDPSASIIKVLDGWLDQGNLVKTSELHSIIKMLRKFSRFSHALQISDWMSEHRVHEISEGDVAIRLDLIAKVGGLGEAEKFFETIPMERRNYHLYGALLNCYASKKVLHKAEQVFQEMKELGFLKGCLPYNVMLNLYVRTGKYTMVEKLLREMEDETVKPDIFTVNTRLHAYSVVSDVEGMEKFLMRCEADQGLHLDWRTYADTANGYIKAGLTEKALEMLRKSEQMVNAQKRKHAYEVLMSFYGAAGKKEEVYRLWSLYKELDGFYNTGYISVISALLKMDDIEEVEKIMEEWEAGHSLFDIRIPHLLITGYCKKGMMEKAEEVVNILVQKWRVEDTSTWERLALGYKMAGKMEKAVEKWKRAIEVSKPGWRPHQVVLMSCVDYLEGQRDMEGLRKILRLLSERGHISYDQLLYDMNGAGLSWKIVDAMGKGRYVEEREVRI.

A mitochondrion-targeting transit peptide spans 1–86 (MKHLLLLRLV…IKMLRKFSRF (86 aa)). 8 PPR repeats span residues 138–172 (NYHL…GFLK), 173–207 (GCLP…TVKP), 208–243 (DIFT…GLHL), 244–274 (DWRT…SEQM), 280–310 (RKHA…YKEL), 314–344 (YNTG…WEAG), 349–379 (DIRI…LVQK), and 384–421 (DTST…GWRP).

This sequence belongs to the PPR family. P subfamily.

It localises to the mitochondrion. The chain is Pentatricopeptide repeat-containing protein At2g20710, mitochondrial from Arabidopsis thaliana (Mouse-ear cress).